A 461-amino-acid polypeptide reads, in one-letter code: Porin AaxA (461 aa).

An N-terminal signal peptide occupies residues 1–22; that stretch reads MSFRSILLTALLSLSFTNTMQA.

It belongs to the OprB family.

The protein localises to the cell outer membrane. Functionally, facilitates L-arginine uptake, as part of the AaxABC system. The arginine uptake by the bacterium in the macrophage may be a virulence factor against the host innate immune response. The polypeptide is Porin AaxA (aaxA) (Chlamydia muridarum (strain MoPn / Nigg)).